Here is a 285-residue protein sequence, read N- to C-terminus: Ribosomal protein L11 methyltransferase (285 aa).

Residues Thr131, Gly154, Asp176, and Asn223 each contribute to the S-adenosyl-L-methionine site.

The protein belongs to the methyltransferase superfamily. PrmA family.

It is found in the cytoplasm. It carries out the reaction L-lysyl-[protein] + 3 S-adenosyl-L-methionine = N(6),N(6),N(6)-trimethyl-L-lysyl-[protein] + 3 S-adenosyl-L-homocysteine + 3 H(+). In terms of biological role, methylates ribosomal protein L11. This Brucella suis (strain ATCC 23445 / NCTC 10510) protein is Ribosomal protein L11 methyltransferase.